The sequence spans 211 residues: Protein-L-isoaspartate O-methyltransferase (211 aa).

Serine 62 is an active-site residue.

Belongs to the methyltransferase superfamily. L-isoaspartyl/D-aspartyl protein methyltransferase family.

It localises to the cytoplasm. It carries out the reaction [protein]-L-isoaspartate + S-adenosyl-L-methionine = [protein]-L-isoaspartate alpha-methyl ester + S-adenosyl-L-homocysteine. Functionally, catalyzes the methyl esterification of L-isoaspartyl residues in peptides and proteins that result from spontaneous decomposition of normal L-aspartyl and L-asparaginyl residues. It plays a role in the repair and/or degradation of damaged proteins. The polypeptide is Protein-L-isoaspartate O-methyltransferase (Shewanella sp. (strain ANA-3)).